A 3637-amino-acid chain; its full sequence is MQSGFDRCLCTPNARVFWERGQVYCTRCLAARPLLPLSQQHPRLGALGLFYRPASPLSWEAPVTYPTKECRPGGMCWLSSIYPIARMTSGNHNFQARLNFIASVVYRDGKLTSKHLEEDFEVYSRGCRWYPITGPVPGIALYANAVHVSDESFPGATHVLSNLPLPQQPLRKGLCPFADARANVWRYKGNTVFVSPQGYLWTTGSNDSVPEPWGEDRRLCEKIISSLPADHLVKINFSNYPFDYSFTGGDGAGFVVFPCKERDTKFSKCWEKIFEDHSGWMAACEEADLADRMGYRTPAGVAGPYLARRLQVRGLRAVVKPENNDYIVWALGVPESYIRHVSRAGEPVEEFFVKVGEFSIVSNCVVTPHPKFRFQTRKYYGYSPPGDGACGLHCISAMLNDIFGDSFTTRLGKCSRDSSEWLSDQDLYQLVMTANLPATIGHCPSAIYKLDCVNQHWTVTKRKGDRAVGRLAPDCLRGVCGECEMGIHIGADTDLSPIVELQLAQDVSPRPGALLWFLELHELCVVDDDFAHAIARAGEEYRRAMGIPRDDWVILAELMTENCRTRHQVLEKLQRGLQLQASSRPSSPASVSPASSVDLSAAGLLLSGTESDKEAVVAVNDGCYTVLGFDKNEATKSEQDLATDLFCDLVKPMETSTTKLESRKILEAAAKALESCKPKRKRSRKKKTRTPSPTCSVDAAVAEPTSVNSLGNQDTRETCASEKKAEKCPTPTPPPRPKRAALKNSNSGCVLKDIIWNQTGPGVKCLTIVEDVRAFLKGITPPGGVLSTRSRITKHIVDHFHSICEQTPELVLAHAEHQAKNLHELLASETAKLILGIGEDPLKKLVGSQRSLPRRLGFGAWLGGQQKTSGGCGEREFKDVGRKSGAERTPSKRDLGVSLGDQLSQDGARRLSSSTACEIKESVPPIIDSGGGLSQKFMAWLNHQVFVLSSHLLAVWSFIFGSRQVLGVFDYVYTLFCLCCVLLCFYLPAIGFMTLVGCVFGSPWRVRLSVFSVWLCVAVVVFQEVLPEPGAVCTSASAERAAALERYTSNGVHRPVNHLSVGLVGTVAGFVARSVGGPRRYWFYFLRLMVLLDLGLVFLAVALRGSCKKCFCKCVRTASHEVQLRVFPSTKVARTTLEAICDMYSAPRVDPIFIATGVRGCWTGSVSPHQVTEKPVSYSNLDDKKISNKTVVPPPTDPQQAVRCLKVLQCGGSIQDVSVPEVKKVTKVPFKAPFFPNVTIDPECYIVVDPVTYSAAMRGGYGVSHLIVGLGDFAEVNGLRFVSGGQIADFVCLGLYVLLNFLLSAWLSSPVSCGRGTNDPWCRNPFSYPVVGQGVMCNSHLCVAEDGLTSPMTLSYSLIDWALMVAIMATVAIFFAKISLLVDVVCVFCCLLMYAFPSLSIAAFGFPFVLCKVSLHPITLVWVQFFLLAVNVWAGVASVVVLISSWFLARATSSLGLITPYDVHMITATPRGASSLASAPEGTYLAAVRRSALTGRCCMFVPTNFGSVLEGSLRTRGCAKNVVSVFGSASGSGGVFTINGNPVVVTASHLLSDGKARVSCVGFSQCLDFKCAGDYAFARVANWKGDAPKAELSHRRGRAYCSPLVGLSLDLLGKNSAFCFTKCGDSGSPVVDEDGNLLGIHTGSNKRGSGMVTTHGGKTLGMANVKLSEMCPHYSGPGVPVSTVKLPKHLVVDVETVSSDLVAVVESLPALEGALSSMQLLCVFFFLWRLIHVPDVPVIRIAFFFLNEILPVMLARLMFSFALSLFFCVHWLFCSSVAVAFGDCCSKSVTGYSVQVLLLRLVIAALNRPCGPFGFSLLGQLSQCCLMLCLLDIELQLLGCLYLGQLLMWPPKEIFFHPTGQFMFLPLFLSLFKRNALADMLVGNGCFDAAFFLKYFAEGNLRDGVSDSCNMTPEGLTAALAITLSDDDLEFLQRHSEFKCFVSASNMRNGAKEFIESAYARALRAQLAATDKIKASKSILAKLESFAGGVVTQVEPGDVVVVLGKKVIGDLVEVVINDAKHVIRVIETRTMAGTQFSVGTICGDLENACEDPSGLVKTSKKQARRQKRTGLGTEVVGTVVIDGVSYNKVWHIATGDVTYEGCLVTENPQLRPLGMTTIGRFQEFIRKHGEKVKTSVEKYPVGKKKSVEFNITTYLLDGEEYDVPDHEPLEWTITIGESDLEAERLTVDQALRHMGHDSLLTAKEKEKLARIIESLNGLQQASALNCLATSGLDRCTRGGLTVSGDAVKLVRYHSRTFSIGDVNLKVMGREEYGRTVGKQGHCLVANLVDGVVVMRKHEPSLVDVLLTGEDADLISPTHGPGNTGVHGFTWDFEAPPTDLELELSEQIITACSIRRGDAPSLDLPYKLHPVRGNPYRDRGVLYNTRFGDIKYLTPQKTKEPLHAAACFNPKGVPVSDSETLVATTLPHGFELYVPTIPQSVLEYLDSRPMHRKCCVRAVVRGLAECDLQKFDLSRQGFVLPGVLYMVRRYLCRLVGIRRRLFLPSTYPAKNSMAGINGNRFPTHVVQSHPDIDALCERACKEHWQTVTPCTLKKQYCSKAKTRTILGTNNFVALGLRSALSGVTQGFMRKGIGSPICLGKNKFTPLPTKVSGRCLEADLASCDRSTPAIIRWFTTNLLFELAGPEEWIPSYVLNCCHDAVSTMSGCFDKRGGLSSGDPVTSVSNTVYSLVIYAQHMVLSAFRCGHKVGGLFLRDSLEMEQLFELQPLLVYSDDVVLYDESSELPNYHFFVDHLDLMLGFKTDRSKTVITSDPQFPGCRIAAGRVLVPQRDRILAALAYHMKASCVSDYFASAAAILMDACACCDYDEDWYFDLVCGIADCARKEGFRFPGPSFYVDMWKRLSVEEKKKCRTCAHCGAPSTLVSSCGLNLCDYHGHGHPHCPVVLPCGHAVGSGVCDGCSSPVMSLNTELDKLLACVPYHPPKVELLSVNDGVSSLPPGRYQARGGVVSVRRDILGNVVDLPDGDYQVMKVAQTCADICMVSINSHILRSQFITGAPGTGKTTYLLSVVRDDDVIYTPTHRTMLDVVKALGTCRFDPPKDTPLEFPVPSRTGPCVRLIRAGFIPGRVSYLDEAAYCNPLDVLKILSKTPLVCVGDLNQLPPVDFIGPCYAFALMLGRQLIEVFRFGPSIVNPIKKFYREELVSRGPDTGVKFLKSYQPYGQVLTPYHRDRVDGAITIDSSQGCTYDVITVYLPTPKSLNSARALVAITRARFYVFVYDPHNQLEQYLNMSEHEPAGAVAFWCGEQPMMISEGRVQRLSGPAQTTDPKLQQLMGLEGTASPLPQVAHNLGFYYSPDLVQFARIPSELCKHWPVVTAQNRTDWPDRLVCSMSKIDKCSRAIFCAGYHVGPSVFLGVPGVVSYYLTKFLKGKPVPLPDSLMSTGRIALNVREYLDEKEMEFSSRCPHAFIGEVKGSNVGGCHHVTSRYLPPVLVPGSVVKIGVSCPGKAAKELCTVTDVYLPELDPYLNPPTKSMDYKLLVDFQPVKLMVWKDATAYFHEGIRPMESMSRFLKVPQEEGVFFDLDEFVTNAKVSKLPCKYSVSANQFLTDVVLSMTHPSLAPPDYELLFARAYCVPGLDVGTLNAYIYRRGPSTYTTSNIARLVKDICCPVGCKGSGYMFPK.

The segment at 8-28 adopts a C4-type; atypical zinc-finger fold; sequence CLCTPNARVFWERGQVYCTRC. The 113-residue stretch at 69-181 folds into the Peptidase C31 domain; that stretch reads ECRPGGMCWL…KGLCPFADAR (113 aa). The PCP1-alpha stretch occupies residues 69–183; sequence ECRPGGMCWL…LCPFADARAN (115 aa). Residues C76 and H147 each act as for Nsp1-alpha papain-like cysteine proteinase activity in the active site. Residues 262 to 380 are PCP1-beta; the sequence is RDTKFSKCWE…KFRFQTRKYY (119 aa). The Peptidase C32 domain maps to 262 to 381; that stretch reads RDTKFSKCWE…FRFQTRKYYG (120 aa). Active-site for Nsp1-beta papain-like cysteine proteinase activity residues include C269 and H340. Residues 381 to 486 enclose the Peptidase C33 domain; that stretch reads GYSPPGDGAC…RGVCGECEMG (106 aa). Active-site for Nsp2 cysteine proteinase activity residues include C390 and H456. 2 disordered regions span residues 676–743 and 865–899; these read CKPK…AALK and QQKT…GVSL. Residues 678–689 show a composition bias toward basic residues; it reads PKRKRSRKKKTR. Basic and acidic residues-rich tracts occupy residues 714-727 and 873-895; these read DTRE…KAEK and GERE…KRDL. A run of 7 helical transmembrane segments spans residues 940 to 960, 981 to 1001, 1083 to 1103, 1287 to 1307, 1362 to 1382, 1390 to 1410, and 1423 to 1443; these read WLNH…SFIF, VLLC…CVFG, FYFL…AVAL, IADF…SAWL, ALMV…SLLV, CLLM…PFVL, and VQFF…VVLI. Positions 979–1103 are HD1; that stretch reads CCVLLCFYLP…LGLVFLAVAL (125 aa). Positions 1287 to 1446 are HD2; sequence IADFVCLGLY…ASVVVLISSW (160 aa). In terms of domain architecture, Peptidase S32 spans 1511 to 1712; that stretch reads GSLRTRGCAK…AVVESLPALE (202 aa). Catalysis depends on charge relay system; for 3C-like serine proteinase activity residues H1549, D1574, and S1626. A run of 5 helical transmembrane segments spans residues 1735 to 1755, 1761 to 1781, 1801 to 1821, 1824 to 1844, and 1853 to 1873; these read DVPV…VMLA, FALS…AVAF, LVIA…LGQL, CCLM…LYLG, and EIFF…SLFK. The HD3 stretch occupies residues 1735–1872; the sequence is DVPVIRIAFF…MFLPLFLSLF (138 aa). Residues 2214 to 2372 enclose the NiRAN domain; the sequence is SLNGLQQASA…LPYKLHPVRG (159 aa). The RdRp catalytic domain occupies 2611-2745; sequence GRCLEADLAS…YDESSELPNY (135 aa). The region spanning 2865 to 2928 is the AV ZBD domain; it reads KKKCRTCAHC…SPVMSLNTEL (64 aa). Zn(2+)-binding residues include C2871, C2874, C2884, C2889, H2892, H2894, H2896, H2898, C2905, H2907, C2914, and C2917. One can recognise a (+)RNA virus helicase ATP-binding domain in the interval 2985–3137; the sequence is QVMKVAQTCA…AFALMLGRQL (153 aa). Position 3013–3020 (3013–3020) interacts with ATP; sequence GAPGTGKT. Positions 3138 to 3269 constitute a (+)RNA virus helicase C-terminal domain; sequence IEVFRFGPSI…CGEQPMMISE (132 aa). Residues 3293–3389 enclose the AV-Nsp11N/CoV-Nsp15M domain; the sequence is EGTASPLPQV…LTKFLKGKPV (97 aa). The region spanning 3391–3513 is the NendoU domain; it reads LPDSLMSTGR…MVWKDATAYF (123 aa). Active-site residues include H3422, H3437, and K3466.

Belongs to the arteriviridae polyprotein family. Post-translationally, specific enzymatic cleavages in vivo by its own proteases yield mature proteins. There are two alternative pathways for processing. Either nsp4-5 is cleaved, which represents the major pathway or the nsp5-6 and nsp6-7 are processed, which represents the minor pathway. The major pathway occurs when nsp2 acts as a cofactor for nsp4.

It localises to the host membrane. It is found in the host cytoplasm. The protein localises to the host perinuclear region. It carries out the reaction RNA(n) + a ribonucleoside 5'-triphosphate = RNA(n+1) + diphosphate. The enzyme catalyses ATP + H2O = ADP + phosphate + H(+). It catalyses the reaction uridylyl-uridylyl-ribonucleotide-RNA = a 3'-end uridylyl-2',3'-cyclophospho-uridine-RNA + a 5'-end dephospho-ribonucleoside-RNA. Functionally, the replicase polyprotein 1ab is a multifunctional protein: it contains the activities necessary for the transcription of negative stranded RNA, leader RNA, subgenomic mRNAs and progeny virion RNA as well as proteinases responsible for the cleavage of the polyprotein into functional products. The Nsp1 chain is essential for viral subgenomic mRNA synthesis. Its function is as follows. The 3C-like serine proteinase chain is responsible for the majority of cleavages as it cleaves the C-terminus of the polyprotein. In terms of biological role, the helicase chain, which contains a zinc finger structure, displays RNA and DNA duplex-unwinding activities with 5' to 3' polarity. Functionally, plays a role in viral transcription/replication and prevents the simultaneous activation of host cell dsRNA sensors, such as MDA5/IFIH1, OAS, and PKR. Acts by degrading the 5'-polyuridines generated during replication of the poly(A) region of viral genomic and subgenomic RNAs. Catalyzes a two-step reaction in which a 2'3'-cyclic phosphate (2'3'-cP) is first generated by 2'-O transesterification, which is then hydrolyzed to a 3'-phosphate (3'-P). If not degraded, poly(U) RNA would hybridize with poly(A) RNA tails and activate host dsRNA sensors. The protein is Replicase polyprotein 1ab (rep) of Mus musculus domesticus (western European house mouse).